The primary structure comprises 461 residues: Alkaline phosphatase 4 (461 aa).

Positions methionine 1 to alanine 41 are cleaved as a signal peptide. Residue aspartate 58 participates in Mg(2+) binding. Residue aspartate 58 coordinates Zn(2+). Residue serine 108 is the Phosphoserine intermediate of the active site. Mg(2+) is bound by residues threonine 161 and glutamate 282. Positions 287, 291, 329, 330, and 423 each coordinate Zn(2+).

It belongs to the alkaline phosphatase family. In terms of assembly, monomer. Requires Mg(2+) as cofactor. It depends on Zn(2+) as a cofactor.

The enzyme catalyses a phosphate monoester + H2O = an alcohol + phosphate. The sequence is that of Alkaline phosphatase 4 (phoA) from Bacillus subtilis (strain 168).